The primary structure comprises 756 residues: ATP-dependent zinc metalloprotease FtsH (756 aa).

Residues methionine 1 to serine 44 lie on the Cytoplasmic side of the membrane. The helical transmembrane segment at tryptophan 45–threonine 65 threads the bilayer. The Extracellular segment spans residues glutamine 66 to serine 148. The helical transmembrane segment at phenylalanine 149 to phenylalanine 169 threads the bilayer. Topologically, residues leucine 170–glycine 756 are cytoplasmic. An ATP-binding site is contributed by glycine 241 to threonine 248. Histidine 463 contacts Zn(2+). The active site involves glutamate 464. Histidine 467 and aspartate 539 together coordinate Zn(2+). 2 stretches are compositionally biased toward basic and acidic residues: residues proline 647–aspartate 662 and leucine 672–glutamate 681. Residues proline 647–glycine 756 are disordered. 2 stretches are compositionally biased toward low complexity: residues alanine 684 to alanine 703 and proline 713 to alanine 724. Over residues glycine 744–glycine 756 the composition is skewed to polar residues.

The protein in the central section; belongs to the AAA ATPase family. In the C-terminal section; belongs to the peptidase M41 family. Homohexamer. It depends on Zn(2+) as a cofactor.

It is found in the cell membrane. In terms of biological role, acts as a processive, ATP-dependent zinc metallopeptidase for both cytoplasmic and membrane proteins. Plays a role in the quality control of integral membrane proteins. This is ATP-dependent zinc metalloprotease FtsH from Rothia mucilaginosa (strain DY-18) (Stomatococcus mucilaginosus).